We begin with the raw amino-acid sequence, 488 residues long: UDP-N-acetylmuramate--L-alanine ligase (488 aa).

ATP is bound at residue 129 to 135; sequence GTHGKTT.

The protein belongs to the MurCDEF family.

Its subcellular location is the cytoplasm. It catalyses the reaction UDP-N-acetyl-alpha-D-muramate + L-alanine + ATP = UDP-N-acetyl-alpha-D-muramoyl-L-alanine + ADP + phosphate + H(+). The protein operates within cell wall biogenesis; peptidoglycan biosynthesis. Functionally, cell wall formation. This is UDP-N-acetylmuramate--L-alanine ligase from Chromohalobacter salexigens (strain ATCC BAA-138 / DSM 3043 / CIP 106854 / NCIMB 13768 / 1H11).